Consider the following 140-residue polypeptide: Large ribosomal subunit protein uL11 (140 aa).

It belongs to the universal ribosomal protein uL11 family. Part of the ribosomal stalk of the 50S ribosomal subunit. Interacts with L10 and the large rRNA to form the base of the stalk. L10 forms an elongated spine to which L12 dimers bind in a sequential fashion forming a multimeric L10(L12)X complex. In terms of processing, one or more lysine residues are methylated.

Functionally, forms part of the ribosomal stalk which helps the ribosome interact with GTP-bound translation factors. The protein is Large ribosomal subunit protein uL11 of Staphylococcus aureus (strain Mu3 / ATCC 700698).